Consider the following 431-residue polypeptide: Adenylosuccinate synthetase (431 aa).

GTP contacts are provided by residues G12 to K18 and G40 to T42. The active-site Proton acceptor is the D13. Positions 13 and 40 each coordinate Mg(2+). IMP contacts are provided by residues D13–K16, N38–H41, T128, R142, Q225, T240, and R304. The active-site Proton donor is the H41. T300–R306 contacts substrate. GTP contacts are provided by residues R306, K332 to D334, and G414 to G416.

The protein belongs to the adenylosuccinate synthetase family. As to quaternary structure, homodimer. Requires Mg(2+) as cofactor.

It localises to the cytoplasm. It catalyses the reaction IMP + L-aspartate + GTP = N(6)-(1,2-dicarboxyethyl)-AMP + GDP + phosphate + 2 H(+). The protein operates within purine metabolism; AMP biosynthesis via de novo pathway; AMP from IMP: step 1/2. Functionally, plays an important role in the de novo pathway of purine nucleotide biosynthesis. Catalyzes the first committed step in the biosynthesis of AMP from IMP. The polypeptide is Adenylosuccinate synthetase (Thermomicrobium roseum (strain ATCC 27502 / DSM 5159 / P-2)).